The primary structure comprises 626 residues: Interferon-induced GTP-binding protein MxC (626 aa).

A Dynamin-type G domain is found at 40–313 (DLNLPAIAVI…LVEHIAKNVP (274 aa)). The interval 50-57 (GDQSSGKS) is G1 motif. Residue 50-57 (GDQSSGKS) participates in GTP binding. The segment at 75–77 (VTR) is G2 motif. A G3 motif region spans residues 151-154 (DLPG). Residues 151–155 (DLPGI) and 220–223 (TKPD) contribute to the GTP site. The interval 220-223 (TKPD) is G4 motif. The interval 252-255 (KCRG) is G5 motif. The 91-residue stretch at 534–624 (LRETAFHLTS…ALPKVVHSAN (91 aa)) folds into the GED domain.

Belongs to the TRAFAC class dynamin-like GTPase superfamily. Dynamin/Fzo/YdjA family.

The protein localises to the cytoplasm. This is Interferon-induced GTP-binding protein MxC (mxc) from Danio rerio (Zebrafish).